A 310-amino-acid chain; its full sequence is Methionyl-tRNA formyltransferase (310 aa).

Position 111–114 (111–114 (SLLP)) interacts with (6S)-5,6,7,8-tetrahydrofolate.

It belongs to the Fmt family.

It carries out the reaction L-methionyl-tRNA(fMet) + (6R)-10-formyltetrahydrofolate = N-formyl-L-methionyl-tRNA(fMet) + (6S)-5,6,7,8-tetrahydrofolate + H(+). In terms of biological role, attaches a formyl group to the free amino group of methionyl-tRNA(fMet). The formyl group appears to play a dual role in the initiator identity of N-formylmethionyl-tRNA by promoting its recognition by IF2 and preventing the misappropriation of this tRNA by the elongation apparatus. The protein is Methionyl-tRNA formyltransferase of Rhodopseudomonas palustris (strain TIE-1).